The sequence spans 264 residues: 3-methyl-2-oxobutanoate hydroxymethyltransferase (264 aa).

Positions 45 and 84 each coordinate Mg(2+). 3-methyl-2-oxobutanoate is bound by residues 45 to 46, Asp-84, and Lys-112; that span reads DS. Glu-114 contacts Mg(2+). Glu-181 acts as the Proton acceptor in catalysis.

It belongs to the PanB family. In terms of assembly, homodecamer; pentamer of dimers. Mg(2+) is required as a cofactor.

Its subcellular location is the cytoplasm. The enzyme catalyses 3-methyl-2-oxobutanoate + (6R)-5,10-methylene-5,6,7,8-tetrahydrofolate + H2O = 2-dehydropantoate + (6S)-5,6,7,8-tetrahydrofolate. The protein operates within cofactor biosynthesis; (R)-pantothenate biosynthesis; (R)-pantoate from 3-methyl-2-oxobutanoate: step 1/2. Catalyzes the reversible reaction in which hydroxymethyl group from 5,10-methylenetetrahydrofolate is transferred onto alpha-ketoisovalerate to form ketopantoate. This Shewanella sp. (strain ANA-3) protein is 3-methyl-2-oxobutanoate hydroxymethyltransferase.